We begin with the raw amino-acid sequence, 450 residues long: Chromosomal replication initiator protein DnaA (450 aa).

The segment at 1–77 (MTENEQIFWN…EVYNAQIAVD (77 aa)) is domain I, interacts with DnaA modulators. Positions 77 to 109 (DYVYEDDLMIEQQHQGQQGYTEQAFQQLPAVQS) are domain II. Positions 110-328 (DLNPKYSFDN…GALKDISLVA (219 aa)) are domain III, AAA+ region. ATP-binding residues include glycine 154, glycine 156, lysine 157, and threonine 158. The domain IV, binds dsDNA stretch occupies residues 329 to 450 (NFKQIDTITV…EIETIKNKIK (122 aa)).

It belongs to the DnaA family. As to quaternary structure, oligomerizes as a right-handed, spiral filament on DNA at oriC.

Its subcellular location is the cytoplasm. Plays an essential role in the initiation and regulation of chromosomal replication. ATP-DnaA binds to the origin of replication (oriC) to initiate formation of the DNA replication initiation complex once per cell cycle. Binds the DnaA box (a 9 base pair repeat at the origin) and separates the double-stranded (ds)DNA. Forms a right-handed helical filament on oriC DNA; dsDNA binds to the exterior of the filament while single-stranded (ss)DNA is stabiized in the filament's interior. The ATP-DnaA-oriC complex binds and stabilizes one strand of the AT-rich DNA unwinding element (DUE), permitting loading of DNA polymerase. After initiation quickly degrades to an ADP-DnaA complex that is not apt for DNA replication. Binds acidic phospholipids. This Streptococcus equi subsp. equi (strain 4047) protein is Chromosomal replication initiator protein DnaA.